The primary structure comprises 384 residues: Flap endonuclease 1 (384 aa).

The interval M1 to R105 is N-domain. D34 contributes to the Mg(2+) binding site. R71 is a DNA binding site. Mg(2+) is bound by residues D87, E159, E161, D180, and D182. The interval E123 to H254 is I-domain. E159 serves as a coordination point for DNA. DNA is bound by residues G232 and D234. D234 is a Mg(2+) binding site. Positions V338 to I346 are interaction with PCNA. The interval I349–K384 is disordered. The segment covering K364–K384 has biased composition (low complexity).

Belongs to the XPG/RAD2 endonuclease family. FEN1 subfamily. Interacts with PCNA. Three molecules of repg bind to one PCNA trimer with each molecule binding to one PCNA monomer. PCNA stimulates the nuclease activity without altering cleavage specificity. Mg(2+) is required as a cofactor. Post-translationally, phosphorylated. Phosphorylation upon DNA damage induces relocalization to the nuclear plasma.

The protein localises to the nucleus. It localises to the nucleolus. Its subcellular location is the nucleoplasm. The protein resides in the mitochondrion. Structure-specific nuclease with 5'-flap endonuclease and 5'-3' exonuclease activities involved in DNA replication and repair. During DNA replication, cleaves the 5'-overhanging flap structure that is generated by displacement synthesis when DNA polymerase encounters the 5'-end of a downstream Okazaki fragment. It enters the flap from the 5'-end and then tracks to cleave the flap base, leaving a nick for ligation. Also involved in the long patch base excision repair (LP-BER) pathway, by cleaving within the apurinic/apyrimidinic (AP) site-terminated flap. Acts as a genome stabilization factor that prevents flaps from equilibrating into structures that lead to duplications and deletions. Also possesses 5'-3' exonuclease activity on nicked or gapped double-stranded DNA, and exhibits RNase H activity. Also involved in replication and repair of rDNA and in repairing mitochondrial DNA. The polypeptide is Flap endonuclease 1 (Dictyostelium discoideum (Social amoeba)).